A 98-amino-acid chain; its full sequence is Co-chaperonin GroES 4 (98 aa).

The protein belongs to the GroES chaperonin family. In terms of assembly, heptamer of 7 subunits arranged in a ring. Interacts with the chaperonin GroEL.

It localises to the cytoplasm. In terms of biological role, together with the chaperonin GroEL, plays an essential role in assisting protein folding. The GroEL-GroES system forms a nano-cage that allows encapsulation of the non-native substrate proteins and provides a physical environment optimized to promote and accelerate protein folding. GroES binds to the apical surface of the GroEL ring, thereby capping the opening of the GroEL channel. This is Co-chaperonin GroES 4 from Mesorhizobium japonicum (strain LMG 29417 / CECT 9101 / MAFF 303099) (Mesorhizobium loti (strain MAFF 303099)).